The following is a 196-amino-acid chain: UMP-CMP kinase (196 aa).

13–18 (GAGKGT) provides a ligand contact to ATP. The interval 33-63 (SAGDLLRDERKKPDSQYGELIESYIRDGRIV) is NMP. A ribonucleoside 5'-phosphate-binding positions include arginine 39, 61–63 (RIV), and 93–96 (GFPR). Residue asparagine 100 participates in CMP binding. Positions 133–143 (ERGKSSGRSDD) are LID. Residue arginine 134 participates in ATP binding. Positions 140 and 151 each coordinate a ribonucleoside 5'-phosphate. Lysine 179 provides a ligand contact to ATP.

This sequence belongs to the adenylate kinase family. UMP-CMP kinase subfamily. Monomer. Requires Mg(2+) as cofactor.

Its subcellular location is the cytoplasm. The protein localises to the nucleus. It carries out the reaction CMP + ATP = CDP + ADP. The catalysed reaction is dCMP + ATP = dCDP + ADP. The enzyme catalyses UMP + ATP = UDP + ADP. It catalyses the reaction a 2'-deoxyribonucleoside 5'-diphosphate + ATP = a 2'-deoxyribonucleoside 5'-triphosphate + ADP. It carries out the reaction a ribonucleoside 5'-diphosphate + ATP = a ribonucleoside 5'-triphosphate + ADP. In terms of biological role, catalyzes the phosphorylation of pyrimidine nucleoside monophosphates at the expense of ATP. Plays an important role in de novo pyrimidine nucleotide biosynthesis. Has preference for UMP and CMP as phosphate acceptors. Also displays broad nucleoside diphosphate kinase activity. This is UMP-CMP kinase (cmpk1) from Xenopus tropicalis (Western clawed frog).